The chain runs to 376 residues: uncharacterized protein (376 aa).

The first 28 residues, 1–28 (MCKPRVWRIAHTIVHVGALLLGTSQLTT), serve as a signal peptide directing secretion. Residue cysteine 29 is the site of N-palmitoyl cysteine attachment. Cysteine 29 carries S-diacylglycerol cysteine lipidation.

The protein belongs to the TP013X lipoprotein family.

The protein localises to the cell membrane. This is an uncharacterized protein from Treponema pallidum (strain Nichols).